The following is a 472-amino-acid chain: Adenosylhomocysteinase (472 aa).

Substrate contacts are provided by threonine 61, aspartate 136, and glutamate 196. 197–199 (TTT) provides a ligand contact to NAD(+). The substrate site is built by lysine 226 and aspartate 230. NAD(+) is bound by residues asparagine 231, 260 to 265 (GYGDVG), glutamate 283, asparagine 318, 339 to 341 (IGH), and asparagine 384.

This sequence belongs to the adenosylhomocysteinase family. Requires NAD(+) as cofactor.

It is found in the cytoplasm. It carries out the reaction S-adenosyl-L-homocysteine + H2O = L-homocysteine + adenosine. Its pathway is amino-acid biosynthesis; L-homocysteine biosynthesis; L-homocysteine from S-adenosyl-L-homocysteine: step 1/1. Its function is as follows. May play a key role in the regulation of the intracellular concentration of adenosylhomocysteine. The polypeptide is Adenosylhomocysteinase (Cupriavidus metallidurans (strain ATCC 43123 / DSM 2839 / NBRC 102507 / CH34) (Ralstonia metallidurans)).